The chain runs to 493 residues: Amidophosphoribosyltransferase (493 aa).

Positions 1 to 26 (MIPTQPLTADLDCDLGLERPDRPEEA) are excised as a propeptide. C27 functions as the Nucleophile in the catalytic mechanism. Residues 27–252 (CGVFALYAPG…PGEMVRITDA (226 aa)) enclose the Glutamine amidotransferase type-2 domain. C268 serves as a coordination point for [4Fe-4S] cluster. Residues S315, D377, and D378 each coordinate Mg(2+). Residues C414, C465, and C468 each coordinate [4Fe-4S] cluster.

This sequence in the C-terminal section; belongs to the purine/pyrimidine phosphoribosyltransferase family. It depends on Mg(2+) as a cofactor. [4Fe-4S] cluster serves as cofactor.

It catalyses the reaction 5-phospho-beta-D-ribosylamine + L-glutamate + diphosphate = 5-phospho-alpha-D-ribose 1-diphosphate + L-glutamine + H2O. It participates in purine metabolism; IMP biosynthesis via de novo pathway; N(1)-(5-phospho-D-ribosyl)glycinamide from 5-phospho-alpha-D-ribose 1-diphosphate: step 1/2. Functionally, catalyzes the formation of phosphoribosylamine from phosphoribosylpyrophosphate (PRPP) and glutamine. The polypeptide is Amidophosphoribosyltransferase (Synechococcus elongatus (strain ATCC 33912 / PCC 7942 / FACHB-805) (Anacystis nidulans R2)).